Reading from the N-terminus, the 132-residue chain is Small ribosomal subunit protein uS8c (132 aa).

Belongs to the universal ribosomal protein uS8 family. As to quaternary structure, part of the 30S ribosomal subunit.

Its subcellular location is the plastid. The protein localises to the chloroplast. In terms of biological role, one of the primary rRNA binding proteins, it binds directly to 16S rRNA central domain where it helps coordinate assembly of the platform of the 30S subunit. In Guillardia theta (Cryptophyte), this protein is Small ribosomal subunit protein uS8c (rps8).